The sequence spans 315 residues: Probable cell division protein WhiA (315 aa).

The H-T-H motif DNA-binding region spans 277–311 (SLQELGAMMPSGQISKSGVNHRLRKLNQIAEGYQQ).

It belongs to the WhiA family.

In terms of biological role, involved in cell division and chromosome segregation. The chain is Probable cell division protein WhiA from Lacticaseibacillus paracasei (strain ATCC 334 / BCRC 17002 / CCUG 31169 / CIP 107868 / KCTC 3260 / NRRL B-441) (Lactobacillus paracasei).